Consider the following 175-residue polypeptide: Inorganic pyrophosphatase (175 aa).

Positions 30, 44, and 56 each coordinate substrate. Residues Asp66, Asp71, and Asp103 each contribute to the Mg(2+) site. Tyr142 contributes to the substrate binding site.

It belongs to the PPase family. In terms of assembly, homohexamer. It depends on Mg(2+) as a cofactor.

The protein localises to the cytoplasm. It carries out the reaction diphosphate + H2O = 2 phosphate + H(+). Its function is as follows. Catalyzes the hydrolysis of inorganic pyrophosphate (PPi) forming two phosphate ions. This chain is Inorganic pyrophosphatase, found in Ralstonia nicotianae (strain ATCC BAA-1114 / GMI1000) (Ralstonia solanacearum).